A 225-amino-acid polypeptide reads, in one-letter code: Cytidylate kinase (225 aa).

ATP is bound at residue 12-20 (GPSGAGKGT).

This sequence belongs to the cytidylate kinase family. Type 1 subfamily.

Its subcellular location is the cytoplasm. It carries out the reaction CMP + ATP = CDP + ADP. The enzyme catalyses dCMP + ATP = dCDP + ADP. This Pectobacterium carotovorum subsp. carotovorum (strain PC1) protein is Cytidylate kinase.